A 754-amino-acid chain; its full sequence is tRNA 5-methylaminomethyl-2-thiouridine biosynthesis bifunctional protein MnmC (754 aa).

A tRNA (mnm(5)s(2)U34)-methyltransferase region spans residues 1 to 320 (MPSCYEHSAQ…RRQAVNNSDS (320 aa)). Positions 324 to 754 (IGGGIAGACL…RKLLKGKALC (431 aa)) are FAD-dependent cmnm(5)s(2)U34 oxidoreductase.

It in the N-terminal section; belongs to the methyltransferase superfamily. tRNA (mnm(5)s(2)U34)-methyltransferase family. In the C-terminal section; belongs to the DAO family. Requires FAD as cofactor.

The protein resides in the cytoplasm. It carries out the reaction 5-aminomethyl-2-thiouridine(34) in tRNA + S-adenosyl-L-methionine = 5-methylaminomethyl-2-thiouridine(34) in tRNA + S-adenosyl-L-homocysteine + H(+). Its function is as follows. Catalyzes the last two steps in the biosynthesis of 5-methylaminomethyl-2-thiouridine (mnm(5)s(2)U) at the wobble position (U34) in tRNA. Catalyzes the FAD-dependent demodification of cmnm(5)s(2)U34 to nm(5)s(2)U34, followed by the transfer of a methyl group from S-adenosyl-L-methionine to nm(5)s(2)U34, to form mnm(5)s(2)U34. The chain is tRNA 5-methylaminomethyl-2-thiouridine biosynthesis bifunctional protein MnmC from Shewanella denitrificans (strain OS217 / ATCC BAA-1090 / DSM 15013).